The sequence spans 254 residues: Coproheme decarboxylase (254 aa).

Residues Arg136, 150–154, His177, Gln190, and Ser228 each bind Fe-coproporphyrin III; that span reads YPMDK. Tyr150 is an active-site residue.

It belongs to the ChdC family. Type 1 subfamily. The cofactor is Fe-coproporphyrin III.

The catalysed reaction is Fe-coproporphyrin III + 2 H2O2 + 2 H(+) = heme b + 2 CO2 + 4 H2O. The enzyme catalyses Fe-coproporphyrin III + H2O2 + H(+) = harderoheme III + CO2 + 2 H2O. It carries out the reaction harderoheme III + H2O2 + H(+) = heme b + CO2 + 2 H2O. It functions in the pathway porphyrin-containing compound metabolism; protoheme biosynthesis. Involved in coproporphyrin-dependent heme b biosynthesis. Catalyzes the decarboxylation of Fe-coproporphyrin III (coproheme) to heme b (protoheme IX), the last step of the pathway. The reaction occurs in a stepwise manner with a three-propionate harderoheme intermediate. The sequence is that of Coproheme decarboxylase from Bacillus subtilis (strain 168).